The sequence spans 337 residues: Probable tyrosine--tRNA ligase, cytoplasmic (337 aa).

Position 35 (Y35) interacts with L-tyrosine. Residues 40–48 carry the 'HIGH' region motif; that stretch reads ITGKPHIAY. 4 residues coordinate L-tyrosine: Y162, Q166, D169, and Q184. Residues 218–222 carry the 'KMSKS' region motif; it reads KMSSS.

It belongs to the class-I aminoacyl-tRNA synthetase family. Homodimer.

Its subcellular location is the cytoplasm. The catalysed reaction is tRNA(Tyr) + L-tyrosine + ATP = L-tyrosyl-tRNA(Tyr) + AMP + diphosphate + H(+). The protein is Probable tyrosine--tRNA ligase, cytoplasmic of Encephalitozoon cuniculi (strain GB-M1) (Microsporidian parasite).